The chain runs to 281 residues: Hexaprenyl pyrophosphate synthase (281 aa).

Residues lysine 42, arginine 45, and histidine 74 each contribute to the isopentenyl diphosphate site. Mg(2+) contacts are provided by aspartate 81 and aspartate 85. Residue arginine 91 participates in isopentenyl diphosphate binding.

This sequence belongs to the FPP/GGPP synthase family. In terms of assembly, homodimer. The cofactor is Mg(2+).

It catalyses the reaction 2 isopentenyl diphosphate + (2E,6E,10E)-geranylgeranyl diphosphate = all-trans-hexaprenyl diphosphate + 2 diphosphate. In terms of biological role, catalyzes consecutive E-type condensation of two isopentenyl pyrophosphate (IPP) molecules with an allylic substrate such as geranylgeranyl diphosphate (GGPP), farnesyl diphosphate (FPP) or geranyl diphosphate (GPP) to yield the medium-chain product trans-C30-hexaprenyl pyrophosphate (HexPP). GGPP is the physiological substrate. The protein is Hexaprenyl pyrophosphate synthase (gdS-2) of Saccharolobus solfataricus (strain ATCC 35092 / DSM 1617 / JCM 11322 / P2) (Sulfolobus solfataricus).